Here is a 291-residue protein sequence, read N- to C-terminus: Formamidopyrimidine-DNA glycosylase (291 aa).

Pro2 functions as the Schiff-base intermediate with DNA in the catalytic mechanism. Residue Glu3 is the Proton donor of the active site. Residue Lys58 is the Proton donor; for beta-elimination activity of the active site. DNA is bound by residues His100, Arg123, and Lys166. An FPG-type zinc finger spans residues 257–291 (SVYGREGKECSRCGMHIVRIVQSGRSSFYCPQCQK). The Proton donor; for delta-elimination activity role is filled by Arg281.

Belongs to the FPG family. Monomer. Requires Zn(2+) as cofactor.

It catalyses the reaction Hydrolysis of DNA containing ring-opened 7-methylguanine residues, releasing 2,6-diamino-4-hydroxy-5-(N-methyl)formamidopyrimidine.. The catalysed reaction is 2'-deoxyribonucleotide-(2'-deoxyribose 5'-phosphate)-2'-deoxyribonucleotide-DNA = a 3'-end 2'-deoxyribonucleotide-(2,3-dehydro-2,3-deoxyribose 5'-phosphate)-DNA + a 5'-end 5'-phospho-2'-deoxyribonucleoside-DNA + H(+). Its function is as follows. Involved in base excision repair of DNA damaged by oxidation or by mutagenic agents. Acts as a DNA glycosylase that recognizes and removes damaged bases. Has a preference for oxidized purines, such as 7,8-dihydro-8-oxoguanine (8-oxoG). Has AP (apurinic/apyrimidinic) lyase activity and introduces nicks in the DNA strand. Cleaves the DNA backbone by beta-delta elimination to generate a single-strand break at the site of the removed base with both 3'- and 5'-phosphates. This Bartonella bacilliformis (strain ATCC 35685 / KC583 / Herrer 020/F12,63) protein is Formamidopyrimidine-DNA glycosylase.